The primary structure comprises 141 residues: Cholinesterase (141 aa).

An N-linked (GlcNAc...) asparagine glycan is attached at asparagine 39. Position 49-50 (glycine 49–glycine 50) interacts with substrate. Serine 131 acts as the Acyl-ester intermediate in catalysis. A Phosphoserine modification is found at serine 131.

Belongs to the type-B carboxylesterase/lipase family. Homotetramer; disulfide-linked. Dimer of dimers. In terms of tissue distribution, present in most cells except erythrocytes.

Its subcellular location is the secreted. It catalyses the reaction an acylcholine + H2O = a carboxylate + choline + H(+). Functionally, esterase with broad substrate specificity. Contributes to the inactivation of the neurotransmitter acetylcholine. Can degrade neurotoxic organophosphate esters. This is Cholinesterase (BCHE) from Macaca mulatta (Rhesus macaque).